The sequence spans 156 residues: Putative pre-16S rRNA nuclease (156 aa).

It belongs to the YqgF nuclease family.

The protein localises to the cytoplasm. Its function is as follows. Could be a nuclease involved in processing of the 5'-end of pre-16S rRNA. This is Putative pre-16S rRNA nuclease from Nocardioides sp. (strain ATCC BAA-499 / JS614).